Consider the following 423-residue polypeptide: MKEIISRHKAGEQIGICSVCSAHPLVIESALRFDLNSGNKVLIEATSNQVNQFGGYTGMKPADFRDFVYGIAQEVGFPRERLILGGDHLGPNCWQNEPADTAMEKSVELIKAYVAAGFSKIHLDASMSCADDPTPLDPMVVAKRAALLCQAAETTATDEQKRHLTYVIGTEVPVPGGEASAINAVHVTREQDAARTLQTHQAAFRALGLDEALNRVIAIVVQPGVEFDHTQIIHYQPQAAQALSAWIKETPMVYEAHSTDYQTRQAYRALVRDHYAILKVGPALTFALREAIFALAQMENELISPEQRSRVLEVIDEVMLNEPGYWKKYYRPTWSQAMVDIHFSLSDRIRYYWPHPRIRQSVEKLIANLNNVTLPLGLISQFMPVQFERLSEGVLTPTPHNLIIDKIQDVLRAYRFGCTPDVA.

Belongs to the GatZ/KbaZ family. GatZ subfamily. Forms a complex with GatY.

Its pathway is carbohydrate metabolism; D-tagatose 6-phosphate degradation; D-glyceraldehyde 3-phosphate and glycerone phosphate from D-tagatose 6-phosphate: step 2/2. In terms of biological role, component of the tagatose-1,6-bisphosphate aldolase GatYZ that is required for full activity and stability of the Y subunit. Could have a chaperone-like function for the proper and stable folding of GatY. When expressed alone, GatZ does not show any aldolase activity. Is involved in the catabolism of galactitol. The polypeptide is D-tagatose-1,6-bisphosphate aldolase subunit GatZ (Salmonella enteritidis PT4 (strain P125109)).